The following is a 165-amino-acid chain: Bark lectin isoform 1 (165 aa).

Residues asparagine 27 and asparagine 57 are each glycosylated (N-linked (GlcNAc...) asparagine). Cystine bridges form between cysteine 33-cysteine 80 and cysteine 126-cysteine 133.

Belongs to the protease inhibitor I3 (leguminous Kunitz-type inhibitor) family. In terms of assembly, dimer.

Its function is as follows. Glucose and N-acetylglucosamine binding lectin. Has hemagglutinating activity against human and rabbit erythrocytes which does not require divalent cations. Inhibits factor Xa and, to a lesser extent, trypsin. Does not inhibit neutrophil elastase, human plasma kallikrein, papain, human plasmin, porcine pancreatic kallikrein and bovin chymotrypsin. Has insecticidal activity against the termite species N.corniger. Induces apoptosis in prostrate cancer cell lines DU145 and PC3. In Crateva tapia (Garlic-pear tree), this protein is Bark lectin isoform 1.